Consider the following 294-residue polypeptide: Tissue factor (294 aa).

The first 28 residues, 1–28 (MAILVRPRLLAALAPTFLGCLLLQVIAG), serve as a signal peptide directing secretion. Residues 29 to 251 (AGIPEKAFNL…TEQWKSFLGE (223 aa)) lie on the Extracellular side of the membrane. 2 N-linked (GlcNAc...) asparagine glycosylation sites follow: N37 and N57. The cysteines at positions 75 and 83 are disulfide-linked. Residues N169 and N200 are each glycosylated (N-linked (GlcNAc...) asparagine). Residues C218 and C241 are joined by a disulfide bond. A WKS motif motif is present at residues 245 to 247 (WKS). A helical transmembrane segment spans residues 252 to 274 (TLIIVGAVVLLATIFIILLSISL). Residue C275 is the site of S-palmitoyl cysteine attachment. At 275-294 (CKRRKNRAGQKGKNTPSRLA) the chain is on the cytoplasmic side.

This sequence belongs to the tissue factor family. As to quaternary structure, interacts with HSPE; the interaction, inhibited by heparin, promotes the generation of activated factor X and activates coagulation in the presence of activated factor VII.

The protein resides in the membrane. Its function is as follows. Initiates blood coagulation by forming a complex with circulating factor VII or VIIa. The [TF:VIIa] complex activates factors IX or X by specific limited proteolysis. TF plays a role in normal hemostasis by initiating the cell-surface assembly and propagation of the coagulation protease cascade. The polypeptide is Tissue factor (F3) (Mus musculus (Mouse)).